A 37-amino-acid polypeptide reads, in one-letter code: Somatostatin-37 (37 aa).

A propeptide spanning residues 1-2 (AL) is cleaved from the precursor. Cys26 and Cys37 are oxidised to a cystine.

This sequence belongs to the somatostatin family.

It is found in the secreted. Functionally, somatostatin inhibits the release of somatotropin. The sequence is that of Somatostatin-37 (sst) from Petromyzon marinus (Sea lamprey).